Reading from the N-terminus, the 581-residue chain is La-related protein 7 (581 aa).

Met1 is modified (N-acetylmethionine). Residues 1–10 (METESGNQKN) are compositionally biased toward polar residues. Disordered stretches follow at residues 1-28 (METE…KKKR), 188-368 (NPPE…ERHK), and 410-440 (KSES…CPTQ). One can recognise an HTH La-type RNA-binding domain in the interval 28–122 (RSRVKQVLAD…KPLGERPKDE (95 aa)). One can recognise an RRM domain in the interval 125–203 (RTVYVELLPK…PRKPGIFPKT (79 aa)). The span at 219–228 (KKKKKKKGRM) shows a compositional bias: basic residues. Residues 229–240 (KKEDNVQAKEEN) are compositionally biased toward basic and acidic residues. A Glycyl lysine isopeptide (Lys-Gly) (interchain with G-Cter in SUMO2) cross-link involves residue Lys237. Position 257 is a phosphothreonine (Thr257). A phosphoserine mark is found at Ser258, Ser261, Ser273, Ser298, Ser299, and Ser300. Residues 316 to 335 (IQKDIIKEPSEASKENRDIE) are compositionally biased toward basic and acidic residues. Ser337 carries the phosphoserine modification. Position 338 is a phosphothreonine (Thr338). The residue at position 351 (Ser351) is a Phosphoserine. The span at 354-367 (KTKRKHKKKHKERH) shows a compositional bias: basic residues. A Glycyl lysine isopeptide (Lys-Gly) (interchain with G-Cter in SUMO2) cross-link involves residue Lys410. Residues 449-562 (QFVSGVIVKI…TEKLITKAEK (114 aa)) enclose the xRRM domain.

Belongs to the LARP7 family. In terms of assembly, core component of the 7SK RNP complex, at least composed of 7SK RNA, LARP7, MEPCE, HEXIM1 (or HEXIM2) and P-TEFb (composed of CDK9 and CCNT1/cyclin-T1). Interacts with METTL16. Interacts with RBM7; upon genotoxic stress this interaction is enhanced, triggering the release of inactive P-TEFb complex from the core, yielding to P-TEFb complex activation. Associates with box C/D small nucleolar ribonucleoprotein (snoRNP) complexes.

The protein localises to the nucleus. Its subcellular location is the nucleoplasm. In terms of biological role, RNA-binding protein that specifically binds distinct small nuclear RNA (snRNAs) and regulates their processing and function. Specifically binds the 7SK snRNA (7SK RNA) and acts as a core component of the 7SK ribonucleoprotein (RNP) complex, thereby acting as a negative regulator of transcription elongation by RNA polymerase II. The 7SK RNP complex sequesters the positive transcription elongation factor b (P-TEFb) in a large inactive 7SK RNP complex preventing RNA polymerase II phosphorylation and subsequent transcriptional elongation. The 7SK RNP complex also promotes snRNA gene transcription by RNA polymerase II via interaction with the little elongation complex (LEC). LARP7 specifically binds to the highly conserved 3'-terminal U-rich stretch of 7SK RNA; on stimulation, remains associated with 7SK RNA, whereas P-TEFb is released from the complex. LARP7 also acts as a regulator of mRNA splicing fidelity by promoting U6 snRNA processing. Specifically binds U6 snRNAs and associates with a subset of box C/D RNP complexes: promotes U6 snRNA 2'-O-methylation by facilitating U6 snRNA loading into box C/D RNP complexes. U6 snRNA 2'-O-methylation is required for mRNA splicing fidelity. Binds U6 snRNAs with a 5'-CAGGG-3' sequence motif. U6 snRNA processing is required for spermatogenesis. The protein is La-related protein 7 of Macaca fascicularis (Crab-eating macaque).